The sequence spans 166 residues: Lipoprotein signal peptidase (166 aa).

The next 3 helical transmembrane spans lie at 12-32 (WLWV…LILQ), 70-90 (WFFS…MYRS), and 102-122 (ALII…GFVV). Active-site residues include Asp123 and Asp141. The helical transmembrane segment at 137–157 (FNLADSAICIGAALIVLEGFL) threads the bilayer.

The protein belongs to the peptidase A8 family.

Its subcellular location is the cell inner membrane. The enzyme catalyses Release of signal peptides from bacterial membrane prolipoproteins. Hydrolyzes -Xaa-Yaa-Zaa-|-(S,diacylglyceryl)Cys-, in which Xaa is hydrophobic (preferably Leu), and Yaa (Ala or Ser) and Zaa (Gly or Ala) have small, neutral side chains.. The protein operates within protein modification; lipoprotein biosynthesis (signal peptide cleavage). Functionally, this protein specifically catalyzes the removal of signal peptides from prolipoproteins. This is Lipoprotein signal peptidase from Klebsiella pneumoniae (strain 342).